Here is an 857-residue protein sequence, read N- to C-terminus: Potassium channel AKT1 (857 aa).

The Cytoplasmic portion of the chain corresponds to 1–61; that stretch reads MRGGALLCGQ…PYDHKYRIWE (61 aa). Residues 62-82 traverse the membrane as a helical segment; that stretch reads AFLVVLVVYTAWVSPFEFGFL. At 83 to 90 the chain is on the extracellular side; that stretch reads RKPRPPLS. The chain crosses the membrane as a helical span at residues 91-111; the sequence is ITDNIVNAFFAIDIIMTFFVG. Residues 112–134 are Cytoplasmic-facing; the sequence is YLDKSTYLIVDDRKQIAFKYLRS. A helical transmembrane segment spans residues 135–155; that stretch reads WFLLDLVSTIPSEAAMRISSQ. Topologically, residues 156–158 are extracellular; it reads SYG. The helical; Voltage-sensor transmembrane segment at 159–179 threads the bilayer; sequence LFNMLRLWRLRRVGALFARLE. At 180–193 the chain is on the cytoplasmic side; that stretch reads KDRNFNYFWVRCAK. A helical membrane pass occupies residues 194-214; it reads LVCVTLFAVHCAACFYYLIAA. Residues 215–241 lie on the Extracellular side of the membrane; it reads RNSNPAKTWIGANVANFLEESLWMRYV. Residues 242–261 constitute an intramembrane region (pore-forming); the sequence is TSMYWSITTLTTVGYGDLHP. At 262–265 the chain is on the extracellular side; it reads VNTK. A helical membrane pass occupies residues 266–286; the sequence is EMIFDIFYMLFNLGLTAYLIG. Residues 287–857 are Cytoplasmic-facing; that stretch reads NMTNLVVHGT…GDHLIFATDS (571 aa). 372–493 lines the a nucleoside 3',5'-cyclic phosphate pocket; it reads LFRGVSNDLL…IMNNLLQHLK (122 aa). 6 ANK repeats span residues 515–546, 550–579, 583–612, 614–643, 647–676, and 680–709; these read KMDL…DPNE, NGRT…DPNC, EGSV…TIDA, DVGH…DVTR, TGTS…DVNK, and HGWT…ERRV. Residues 790–857 enclose the KHA domain; it reads RVTISCAEKD…GDHLIFATDS (68 aa).

This sequence belongs to the potassium channel family. Plant (TC 1.A.1.4) subfamily. In terms of assembly, the potassium channel is probably composed of a homo- or heterotetrameric complex of pore-forming subunits. Possible heteromultimer with AKT2 or KAT3. Part of a K(+)-channel calcium-sensing kinase/phosphatase complex composed by a calcium sensor CBL (CBL1, CBL2, CBL3 or CBL9), a kinase CIPK (CIPK6, CIPK16 or CIPK23), a phosphatase PP2C (AIP1) and a K(+)-channel (AKT1). Interacts directly with AIP1, CBL10, CIPK6, CIPK16 and CIPK23. Phosphorylated by CIPK proteins CIPK6, CIPK16 and CIPK23. The activation by phosphorylation is induced by low K(+) conditions and stimulates K(+) uptake and relocation. Dephosphorylation by AIP1 repressed the transport activity. In terms of tissue distribution, preferentially expressed in the peripheral cell layers of root mature including root cortex and root hairs. Detected also, at a lower level, in the mesophyll of the leaves and at restricted sites corresponding to hydathodes and guard cells.

The protein resides in the cell membrane. Highly selective inward-rectifying potassium channel that mediate potassium uptake by plant roots in response to low K(+) conditions, by a calcium-, CBL-, and CIPK-dependent pathway. Positively regulated by phosphorylation by CIPK23. Negatively regulated by a kinase-independent regulatory mechanism involving a competing direct binding of CBL10. Involved in the stomatal regulation by monitoring the turgor pressure in guard cells. Assuming opened or closed conformations in response to the voltage difference across the membrane, the channel is activated by hyperpolarization. May interact with the cytoskeleton or with regulatory proteins. Is essential with POT5/HAK5 for high-affinity potassium uptake in roots during seedling establishment and postgermination growth under low potassium conditions. In Arabidopsis thaliana (Mouse-ear cress), this protein is Potassium channel AKT1 (AKT1).